The chain runs to 380 residues: tRNA-specific 2-thiouridylase MnmA (380 aa).

Residues 6–13 (ALSGGVDS) and methionine 32 each bind ATP. Cysteine 101 serves as the catalytic Nucleophile. Cysteine 101 and cysteine 199 are joined by a disulfide. An ATP-binding site is contributed by glycine 125. An interaction with tRNA region spans residues 148-150 (KDQ). Cysteine 199 functions as the Cysteine persulfide intermediate in the catalytic mechanism.

Belongs to the MnmA/TRMU family.

The protein resides in the cytoplasm. The enzyme catalyses S-sulfanyl-L-cysteinyl-[protein] + uridine(34) in tRNA + AH2 + ATP = 2-thiouridine(34) in tRNA + L-cysteinyl-[protein] + A + AMP + diphosphate + H(+). Its function is as follows. Catalyzes the 2-thiolation of uridine at the wobble position (U34) of tRNA, leading to the formation of s(2)U34. The sequence is that of tRNA-specific 2-thiouridylase MnmA from Beutenbergia cavernae (strain ATCC BAA-8 / DSM 12333 / CCUG 43141 / JCM 11478 / NBRC 16432 / NCIMB 13614 / HKI 0122).